The following is a 615-amino-acid chain: DNA mismatch repair protein MutL (615 aa).

Residues 362-397 (HFAEPAVREPVAPRYSPAPASGSRPAAPWPNAQPGY) form a disordered region. Positions 373-387 (APRYSPAPASGSRPA) are enriched in low complexity.

The protein belongs to the DNA mismatch repair MutL/HexB family.

Functionally, this protein is involved in the repair of mismatches in DNA. It is required for dam-dependent methyl-directed DNA mismatch repair. May act as a 'molecular matchmaker', a protein that promotes the formation of a stable complex between two or more DNA-binding proteins in an ATP-dependent manner without itself being part of a final effector complex. This chain is DNA mismatch repair protein MutL, found in Escherichia coli O81 (strain ED1a).